Here is a 522-residue protein sequence, read N- to C-terminus: MSQDLQKEVASRKTFAIISHPDAGKTTITEQLLLFGGVIRSAGTVKGKKSGKFATSDWMEIEKQRGISVTSSVMQFDYNGSRINILDTPGHSDFSEDTYRTLMAVDSAVMVIDAAKGIEAQTLKLFKVCRMRGIPIFTFINKMDRQGKMPLELLAELEEVLEIESYPMNWPIGMGKELAGLYDRYHRVIEQYRSEEDERFLPLGEDGDLKEAHEIQKSLYYDQALEEIMLLDEAGNDFSRERILAGEQTPVFFGSALTNFGVETFLRTFVDFAPAPSSHESNEGIIEADNPKFSGFIFKIQANMNPAHRDRIAFIRICSGEFERGMNVTLTRTGKSIKLANSTQFMADDRETVNRAVAGDIIGLYDTGNYQIGDTITNGSKKLEFEKLPQFTPELFMRVYAKNVMKQKHFHKGVEQLVQEGAIQLFKTWRTEEYIIGAVGQLQFEVFEHRMRGEYNSEIRMEPIGKKIARWVKEEDADEKLSTARSMLVKDRFDQPLFLFENEFAINWFNDKNPDIELTSLL.

The tr-type G domain occupies 10-277 (ASRKTFAIIS…TFVDFAPAPS (268 aa)). GTP-binding positions include 19-26 (SHPDAGKT), 87-91 (DTPGH), and 141-144 (NKMD).

It belongs to the TRAFAC class translation factor GTPase superfamily. Classic translation factor GTPase family. PrfC subfamily.

It localises to the cytoplasm. In terms of biological role, increases the formation of ribosomal termination complexes and stimulates activities of RF-1 and RF-2. It binds guanine nucleotides and has strong preference for UGA stop codons. It may interact directly with the ribosome. The stimulation of RF-1 and RF-2 is significantly reduced by GTP and GDP, but not by GMP. This Listeria welshimeri serovar 6b (strain ATCC 35897 / DSM 20650 / CCUG 15529 / CIP 8149 / NCTC 11857 / SLCC 5334 / V8) protein is Peptide chain release factor 3.